A 231-amino-acid chain; its full sequence is Succinate dehydrogenase subunit 5, mitochondrial (231 aa).

A mitochondrion-targeting transit peptide spans Met1 to Phe63.

As to quaternary structure, component of complex II composed of eight subunits in plants: four classical SDH subunits SDH1, SDH2, SDH3 and SDH4 (a flavoprotein (FP), an iron-sulfur protein (IP), and a cytochrome b composed of a large and a small subunit.), as well as four subunits unknown in mitochondria from bacteria and heterotrophic eukaryotes.

It is found in the mitochondrion inner membrane. Its pathway is carbohydrate metabolism; tricarboxylic acid cycle. This chain is Succinate dehydrogenase subunit 5, mitochondrial, found in Oryza sativa subsp. japonica (Rice).